Here is a 337-residue protein sequence, read N- to C-terminus: Centromere protein N (337 aa).

S226 and S233 each carry phosphoserine.

It belongs to the CENP-N/CHL4 family. Component of the CENPA-NAC complex, at least composed of CENPA, CENPC, CENPH, CENPM, CENPN, CENPT and CENPU. The CENPA-NAC complex interacts with the CENPA-CAD complex, composed of CENPI, CENPK, CENPL, CENPO, CENPP, CENPQ, CENPR and CENPS. Interacts directly with CENPA. Identified in a centromere complex containing histones H2A, H2B and H4, and at least CENPA, CENPB, CENPC, CENPT, CENPN, HJURP, SUPT16H, SSRP1 and RSF1.

The protein resides in the nucleus. It is found in the chromosome. The protein localises to the centromere. It localises to the kinetochore. Functionally, component of the CENPA-NAC (nucleosome-associated) complex, a complex that plays a central role in assembly of kinetochore proteins, mitotic progression and chromosome segregation. The CENPA-NAC complex recruits the CENPA-CAD (nucleosome distal) complex and may be involved in incorporation of newly synthesized CENPA into centromeres. CENPN is the first protein to bind specifically to CENPA nucleosomes and the direct binding of CENPA nucleosomes by CENPN is required for centromere assembly. Required for chromosome congression and efficiently align the chromosomes on a metaphase plate. The chain is Centromere protein N (Cenpn) from Mus musculus (Mouse).